A 175-amino-acid chain; its full sequence is Crossover junction endodeoxyribonuclease RuvC (175 aa).

Catalysis depends on residues aspartate 12, glutamate 72, and aspartate 144. The Mg(2+) site is built by aspartate 12, glutamate 72, and aspartate 144.

It belongs to the RuvC family. In terms of assembly, homodimer which binds Holliday junction (HJ) DNA. The HJ becomes 2-fold symmetrical on binding to RuvC with unstacked arms; it has a different conformation from HJ DNA in complex with RuvA. In the full resolvosome a probable DNA-RuvA(4)-RuvB(12)-RuvC(2) complex forms which resolves the HJ. Mg(2+) serves as cofactor.

It localises to the cytoplasm. It catalyses the reaction Endonucleolytic cleavage at a junction such as a reciprocal single-stranded crossover between two homologous DNA duplexes (Holliday junction).. In terms of biological role, the RuvA-RuvB-RuvC complex processes Holliday junction (HJ) DNA during genetic recombination and DNA repair. Endonuclease that resolves HJ intermediates. Cleaves cruciform DNA by making single-stranded nicks across the HJ at symmetrical positions within the homologous arms, yielding a 5'-phosphate and a 3'-hydroxyl group; requires a central core of homology in the junction. The consensus cleavage sequence is 5'-(A/T)TT(C/G)-3'. Cleavage occurs on the 3'-side of the TT dinucleotide at the point of strand exchange. HJ branch migration catalyzed by RuvA-RuvB allows RuvC to scan DNA until it finds its consensus sequence, where it cleaves and resolves the cruciform DNA. The chain is Crossover junction endodeoxyribonuclease RuvC from Beijerinckia indica subsp. indica (strain ATCC 9039 / DSM 1715 / NCIMB 8712).